The chain runs to 93 residues: Microcin N immunity protein (93 aa).

Transmembrane regions (helical) follow at residues 3–23 (FLNFAFSPVFFSIMACYFIVW), 36–56 (LSIIIISFLICFIYPWLNYKI), and 68–88 (LFCFLSSLVAVVINLIVYFIL).

This sequence belongs to the MceB microcin immunity protein family.

It is found in the cell inner membrane. In terms of biological role, probably able to protect the producing cell against microcin N (microcin 24). In Escherichia coli, this protein is Microcin N immunity protein.